The chain runs to 31 residues: Cyclotide vibi-H (31 aa).

The segment at residues 1–31 (GLLPCAESCVYIPCLTTVIGCSCKSKVCYKN) is a cross-link (cyclopeptide (Gly-Asn)). 3 disulfides stabilise this stretch: Cys-5–Cys-21, Cys-9–Cys-23, and Cys-14–Cys-28.

In terms of processing, this is a cyclic peptide.

Probably participates in a plant defense mechanism. Has cytotoxic activity, active against a human lymphoma cell line with an IC(50) of 1.6 uM. This chain is Cyclotide vibi-H, found in Viola biflora (Yellow wood violet).